A 1216-amino-acid chain; its full sequence is MSRLLWKKVAGAKVASGPVPATGRWVSSSVLDPVPSDGQPQSQMPSSENGQLRLNPLHIQMLSRGLHEQIFGCGGDVPDEAAVQRSIEHLRKHGLWGQPTTPLPDVQLRLPRLFGGNLDQHFRLLAQKQSLPYLEAAASLSEAQLPPQPRKWVWAEGWTRYGPEGEAEPVAIPEERALVFDVEVCLAEGTCPTLAVAISPSAWYSWCSRRLVEERYSWTSQLSPADLIPLGVSASASSSTQQDWQEQLVVGHNVSFDRAHIREQYLIQGSRMRFLDTMSMHMAISGLSSFQRSLWMGAKQGKHKTQHPTKRGQKSQKNANGPAISSWDWMDISSANNLADVHNLYVGGPRLAKEPRELFVKGSMRDIRENFQDLMEYCARDVWATFEVFQQQLPLFLERCPHPVTLAGMLEMGVSYLPVNQNWERYLTEAQSTYEELQREMKKSLMELANDACQLLSGERYKEDPWLWDLEWDLQEFKQKKAKKVKKTASASKLPIEGAGPFGDPMDQEDPGPPSEEEELQQNIMAHTRLQQLKSTTDLLPKRPQHLPGHPGWYRKLCPRLDDPAWTPGPSLLSLQMRVTPKLMALTWDGFPLHYSDSHGWGYLVPGRRDNLTELPVSPTEESAAVTCPYRAIESLYRRHCLDQGKQQLETQETDLAEEFLLTDSAMWQTVEELGCLDVEAEATVESSGLSQPLVPPTACAPKTSQPTYHHGNGPYNDVDIPGCWFFKLPHKDGNNYNVGSPFAKDFLPKMEDGTLQAGPGGARGPRALEINKMISFWRNAHKRISSQMVVWLPRSALPRAVTRHPSFDEESHYGAILPQVVTAGTITRRAVEPTWLTASNARPDRVGSELKAMVQAPPGYVLVGADVDSQELWIAAVLGDAHFAGMHGCTAFGWMTLQGRKSRGTDLHSKTAATVGISREHAKVFNYGRIYGAGQSFAERLLMQFNHRLSRQEAADKAQQMYAVTKGLRRYRLSDDGEWLVKQLNVPVDRTEDGWVSLQDLRKIRREASRKSRWKKWEVVTERAWTGGTESEMFNKLESIAMSDTPRTPVLGCCISRALEPSVVQGEFMTSRVNWVVQSSAVDYLHLMLVAMKWLFEEFAIDGRFCISIHDEVRYLVREEDRYRAALALQITNLLTRCMFAYKLGLNDLPQSVAFFSAVDIDQCLRKEVTMDCKTPSNPTGMERKYGIPQGEALDIYQIIELTKGSLEKRSQPGP.

Residues 27–37 are compositionally biased toward low complexity; that stretch reads SSSVLDPVPSD. The tract at residues 27 to 50 is disordered; the sequence is SSSVLDPVPSDGQPQSQMPSSENG. Over residues 38–50 the composition is skewed to polar residues; sequence GQPQSQMPSSENG. Positions 179 to 183 match the Exo I motif; sequence VFDVE. The active-site Exonuclease activity is aspartate 181. An Exo II motif is present at residues 250–258; the sequence is VGHNVSFDR. Residue serine 289 coordinates DNA. A compositionally biased stretch (basic residues) spans 301–314; the sequence is GKHKTQHPTKRGQK. A disordered region spans residues 301 to 321; sequence GKHKTQHPTKRGQKSQKNANG. An Exo III motif is present at residues 377–385; the sequence is YCARDVWAT. The segment at 488–518 is disordered; sequence TASASKLPIEGAGPFGDPMDQEDPGPPSEEE. Residues 491 to 552 form an accessory-interacting determinant region; the sequence is ASKLPIEGAG…RPQHLPGHPG (62 aa). Over residues 506-518 the composition is skewed to acidic residues; that stretch reads MDQEDPGPPSEEE. Arginine 560 provides a ligand contact to RNA. Serine 574 provides a ligand contact to DNA. Residues histidine 731, glycine 740, and lysine 745 each contribute to the RNA site. 2 residues coordinate DNA: lysine 783 and threonine 826. The segment at 835–841 is trigger loop; sequence TWLTASN. Residues serine 840 and arginine 846 each coordinate RNA. The Pol A motif lies at 864 to 873; sequence VGADVDSQEL. Residues aspartate 867, valine 868, serine 870, glutamate 872, arginine 920, lysine 924, and tyrosine 928 each coordinate a 2'-deoxyribonucleoside 5'-triphosphate. Mg(2+)-binding residues include aspartate 867 and valine 868. A Pol B motif is present at residues 920-935; sequence REHAKVFNYGRIYGAG. Positions 1071 and 1072 each coordinate DNA. Positions 1111–1118 match the Pol C motif; sequence HDEVRYLV. Aspartate 1112 is an a 2'-deoxyribonucleoside 5'-triphosphate binding site. Aspartate 1112 provides a ligand contact to Mg(2+).

It belongs to the DNA polymerase type-A family. Heterotrimer composed of a catalytic subunit and a homodimer of accessory subunits (POLG:POLG2). Interacts with TTC3. Interacts with LIG3. Mg(2+) is required as a cofactor.

It localises to the mitochondrion. The protein resides in the mitochondrion matrix. It is found in the mitochondrion nucleoid. It catalyses the reaction DNA(n) + a 2'-deoxyribonucleoside 5'-triphosphate = DNA(n+1) + diphosphate. It carries out the reaction a 3'-end 2'-deoxyribonucleotidyl-deoxyribonucleotide-DNA + H2O = a 3'-end 2'-deoxyribonucleotide-DNA + a 2'-deoxyribonucleoside 5'-phosphate + H(+). The catalysed reaction is a 5'-end 2'-deoxyribose-2'-deoxyribonucleotide-DNA = (2E,4S)-4-hydroxypenten-2-al-5-phosphate + a 5'-end 5'-phospho-2'-deoxyribonucleoside-DNA + H(+). Its activity is regulated as follows. Inhibited by dideoxynucleotides such as antiviral agent zalcitabine. In terms of biological role, catalytic subunit of DNA polymerase gamma solely responsible for replication of mitochondrial DNA (mtDNA). Replicates both heavy and light strands of the circular mtDNA genome using a single-stranded DNA template, RNA primers and the four deoxyribonucleoside triphosphates as substrates. Has 5' -&gt; 3' polymerase activity. Functionally interacts with TWNK and SSBP1 at the replication fork to form a highly processive replisome, where TWNK unwinds the double-stranded DNA template prior to replication and SSBP1 covers the parental heavy strand to enable continuous replication of the entire mitochondrial genome. A single nucleotide incorporation cycle includes binding of the incoming nucleotide at the insertion site, a phosphodiester bond formation reaction that extends the 3'-end of the primer DNA, and translocation of the primer terminus to the post-insertion site. After completing replication of a mtDNA strand, mediates 3' -&gt; 5' exonucleolytic degradation at the nick to enable proper ligation. Highly accurate due to high nucleotide selectivity and 3' -&gt; 5' exonucleolytic proofreading. Proficiently corrects base substitutions, single-base additions and deletions in non-repetitive sequences and short repeats, but displays lower proofreading activity when replicating longer homopolymeric stretches. Exerts exonuclease activity toward single-stranded DNA and double-stranded DNA containing 3'-terminal mispairs. When a misincorporation occurs, transitions from replication to a pro-nucleolytic editing mode and removes the missincorporated nucleoside in the exonuclease active site. Proceeds via an SN2 nucleolytic mechanism in which Asp-198 catalyzes phosphodiester bond hydrolysis and Glu-200 stabilizes the leaving group. As a result the primer strand becomes one nucleotide shorter and is positioned in the post-insertion site, ready to resume DNA synthesis. Exerts 5'-deoxyribose phosphate (dRP) lyase activity and mediates repair-associated mtDNA synthesis (gap filling) in base-excision repair pathway. Catalyzes the release of the 5'-terminal 2-deoxyribose-5-phosphate sugar moiety from incised apurinic/apyrimidinic (AP) sites to produce a substrate for DNA ligase. The dRP lyase reaction does not require divalent metal ions and likely proceeds via a Schiff base intermediate in a beta-elimination reaction mechanism. In Rattus norvegicus (Rat), this protein is DNA polymerase subunit gamma-1.